We begin with the raw amino-acid sequence, 1521 residues long: Probable DNA topoisomerase 2 (1521 aa).

Residues 1-10 are compositionally biased toward acidic residues; the sequence is MSDSENDYSD. A disordered region spans residues 1 to 87; sequence MSDSENDYSD…DDKSSSSDNE (87 aa). Residues 36–48 show a composition bias toward basic residues; the sequence is SKKKASATRKPAA. Low complexity predominate over residues 49 to 62; it reads KKATTTTTSTTKKS. Residues asparagine 163, asparagine 192, 220 to 222, and 233 to 240 contribute to the ATP site; these read SSH and GRNGFGAK. Residues 412-414 form an interaction with DNA region; sequence NKK. 446 to 448 is a binding site for ATP; the sequence is QTK. The region spanning 527-640 is the Toprim domain; that stretch reads CTLILTEGDS…TLLRMPGFLV (114 aa). 3 residues coordinate Mg(2+): glutamate 533, aspartate 609, and aspartate 611. Residues 771 to 1273 enclose the Topo IIA-type catalytic domain; the sequence is IPNIVDGLKT…PIQEIYKRDL (503 aa). Tyrosine 861 (O-(5'-phospho-DNA)-tyrosine intermediate) is an active-site residue. Positions 1007–1047 are disordered; it reads GTRKKKKEEKEKKAASRKGTKAKPTTTKRSKRVDDDDDNEK. The segment covering 1021 to 1037 has biased composition (basic residues); sequence ASRKGTKAKPTTTKRSK. The interaction with DNA stretch occupies residues 1085-1094; that stretch reads KLVSTINETN. 2 disordered regions span residues 1192–1222 and 1335–1521; these read KIKKKKNAFDEEDAAISSDEEKDGAQEEQDD and IPTT…SDSD. A compositionally biased stretch (acidic residues) spans 1201-1222; that stretch reads DEEDAAISSDEEKDGAQEEQDD. Low complexity predominate over residues 1354–1368; sequence TTSTSTSTTTSSNTK. Residues 1422 to 1438 show a composition bias toward acidic residues; sequence LSDESDQESDQESDQGS. Residues 1454–1467 are compositionally biased toward low complexity; it reads PTTIATKKATTSKS. Basic and acidic residues predominate over residues 1468–1480; it reads KVIDDKSSDDEVI. Residues 1503 to 1521 show a composition bias toward acidic residues; the sequence is SDSDDDDLYDNEESSSDSD.

Belongs to the type II topoisomerase family. In terms of assembly, homodimer. The cofactor is Mg(2+). Mn(2+) serves as cofactor. Requires Ca(2+) as cofactor.

The protein resides in the nucleus. The enzyme catalyses ATP-dependent breakage, passage and rejoining of double-stranded DNA.. Its function is as follows. Control of topological states of DNA by transient breakage and subsequent rejoining of DNA strands. Topoisomerase II makes double-strand breaks. The sequence is that of Probable DNA topoisomerase 2 (top2) from Dictyostelium discoideum (Social amoeba).